Here is a 198-residue protein sequence, read N- to C-terminus: Recombination protein RecR (198 aa).

The C4-type zinc-finger motif lies at 57 to 72; sequence CSVCGNLTDEDPCAIC. A Toprim domain is found at 80–175; sequence STILIVEDSR…KVTRLARGLA (96 aa).

Belongs to the RecR family.

Functionally, may play a role in DNA repair. It seems to be involved in an RecBC-independent recombinational process of DNA repair. It may act with RecF and RecO. The sequence is that of Recombination protein RecR from Streptococcus sanguinis (strain SK36).